A 719-amino-acid chain; its full sequence is MLKIVKKLEVLMKYFVPNEVFSIRKLKVGTCSVLLAISILGSQGILSDEVVTSSSPMATKESSNAITNDLDNSPTVNQNRSAEMIASNSTTNGLDNSLSVNSISSNGTIRSNSQLDNRTVESTVTSTNENKSYKEDVISDRIIKKEFEDTALSVKDYGAVGDGIHDDRQAIQDAIDAAAQGLGGGNVYFPEGTYLVKEIVFLKSHTHLELNEKATILNGINIKNHPSIVFMTGLFTDDGAQVEWGPTEDISYSGGTIDMNGALNEEGTKAKNLPLINSSGAFAIGNSNNVTIKNVTFKDSYQGHAIQIAGSKNVLVDNSRFLGQALPKTMKDGQIISKESIQIEPLTRKGFPYALNDDGKKSENVTIQNSYFGKSDKSGELVTAIGTHYQTLSTQNPSNIKILNNHFDNMMYAGVRFTGFTDVLIKGNRFDKKVKGESVHYRESGAALVNAYSYKNTKDLLDLNKQVVIAENIFNIADPKTKAIRVAKDSAEYLGKVSDITVTKNVINNNSKETEQPNIELLRVSDNLVVSENSIFGGKEGIVIEDSKGKITVLNNQFYNLSGKYISFIKSNANGKEPVIRDSDGNFNIVTENGLYKIVTNNLSDKNEKEKNKEEKQSNSNNVIDSNQKNGEFNSSKDNRQMNDKIDNKQDNKTEEVNYKIVGDGRETENHINKSKEIVDVKQKLPKTGSNKIMELFLTVTGIGLLLTLKGLKYYGKDK.

The N-terminal stretch at 1 to 45 (MLKIVKKLEVLMKYFVPNEVFSIRKLKVGTCSVLLAISILGSQGI) is a signal peptide. Disordered stretches follow at residues 56-76 (PMATKESSNAITNDLDNSPTV) and 109-128 (IRSNSQLDNRTVESTVTSTN). 5 PbH1 repeats span residues 287-310 (SNNVTIKNVTFKDSYQGHAIQIAG), 362-384 (SENVTIQNSYFGKSDKSGELVTA), 397-419 (PSNIKILNNHFDNMMYAGVRFTG), 497-523 (VSDITVTKNVINNNSKETEQPNIELLR), and 525-546 (SDNLVVSENSIFGGKEGIVIED). Residues 601-658 (NNLSDKNEKEKNKEEKQSNSNNVIDSNQKNGEFNSSKDNRQMNDKIDNKQDNKTEEVN) adopt a coiled-coil conformation. Residues 606-617 (KNEKEKNKEEKQ) are compositionally biased toward basic and acidic residues. Positions 606-655 (KNEKEKNKEEKQSNSNNVIDSNQKNGEFNSSKDNRQMNDKIDNKQDNKTE) are disordered. Residues 623 to 634 (VIDSNQKNGEFN) show a composition bias toward polar residues. A compositionally biased stretch (basic and acidic residues) spans 635–655 (SSKDNRQMNDKIDNKQDNKTE). Residues 685 to 689 (LPKTG) carry the LPXTG sorting signal motif. Residue T688 is modified to Pentaglycyl murein peptidoglycan amidated threonine. Positions 689 to 719 (GSNKIMELFLTVTGIGLLLTLKGLKYYGKDK) are cleaved as a propeptide — removed by sortase.

It localises to the secreted. The protein resides in the cell wall. In terms of biological role, acts as a fibronectin-dependent adhesin and invasin. Binds host (in this case human) fibronectin, plasmin, plasminogen, and human serum albumin. Where the bacteria adhere to human cells there is major recruitment of microvilli which seem to fuse to cover the streptococcal chains. Antibodies to this protein reduce bacterial growth in human blood. In Streptococcus pneumoniae (strain ATCC BAA-255 / R6), this protein is Plasmin and fibronectin-binding protein A (pfbA).